Here is a 260-residue protein sequence, read N- to C-terminus: MSHHWGYSKSNGPENWHKEFPIANGDRQSPVDIDTGTAQHDPSLQPLLICYDKVASKSIVNNGHSFNVEFDDSQDFAVLKEGPLSGSYRLIQFHFHWGSSDGQGSEHTVNKKKYAAELHLVHWNTKYGDFGKAVQHPDGLAVLGIFLKIGPASQGLQKITEALHSIKTKGKRAAFANFDPCSLLPGNLDYWTYPGSLTTPPLLECVTWIVLKEPITVSSEQMSHFRKLNFNSEGEAEELMVDNWRPAQPLKNRKIKASFK.

At Ser-2 the chain carries N-acetylserine. Ser-2 is modified (phosphoserine). An Alpha-carbonic anhydrase domain is found at 3–259 (HHWGYSKSNG…LKNRKIKASF (257 aa)). Residues 16 to 39 (WHKEFPIANGDRQSPVDIDTGTAQ) form a disordered region. Residue His-64 is the Proton donor/acceptor of the active site. Ser-87 carries the post-translational modification Phosphoserine. Zn(2+)-binding residues include His-94, His-96, and His-119. Ser-165 is modified (phosphoserine). 198–199 (TT) serves as a coordination point for substrate. At Ser-232 the chain carries Phosphoserine.

This sequence belongs to the alpha-carbonic anhydrase family. In terms of assembly, interacts with SLC4A4 and SLC26A6. Interaction with SLC4A7 regulates SLC4A7 transporter activity. It depends on Zn(2+) as a cofactor.

Its subcellular location is the cytoplasm. It localises to the cell membrane. The catalysed reaction is hydrogencarbonate + H(+) = CO2 + H2O. The enzyme catalyses urea = cyanamide + H2O. Its activity is regulated as follows. Inhibited by acetazolamide. Catalyzes the reversible hydration of carbon dioxide. Can also hydrate cyanamide to urea. Involved in the regulation of fluid secretion into the anterior chamber of the eye. Essential for bone resorption and osteoclast differentiation. Contributes to intracellular pH regulation in the duodenal upper villous epithelium during proton-coupled peptide absorption. Stimulates the chloride-bicarbonate exchange activity of SLC26A6. The protein is Carbonic anhydrase 2 (Ca2) of Rattus norvegicus (Rat).